We begin with the raw amino-acid sequence, 57 residues long: Andropin (57 aa).

Residues 1–23 (MKYFVVLVVLALILAISVGPSDA) form the signal peptide.

This sequence belongs to the andropin family. Ejaculatory duct of adult males.

The protein resides in the secreted. In terms of biological role, male-specific peptide with moderate activity against Gram-positive bacteria. The chain is Andropin (Anp) from Drosophila melanogaster (Fruit fly).